Consider the following 63-residue polypeptide: Laccase-C1 (63 aa).

Belongs to the multicopper oxidase family. As to quaternary structure, monomer. Cu cation serves as cofactor. Post-translationally, glycosylated; contains 16% carbohydrates.

It localises to the secreted. It carries out the reaction 4 hydroquinone + O2 = 4 benzosemiquinone + 2 H2O. Inhibited by sodium azide. In terms of biological role, lignin degradation and detoxification of lignin-derived products. Oxidation of a broad range of substrates including mono-, di- and polyphenols, aromatic amines and methoxy-substituted phenols accompanied by reduction of oxygen to water. The sequence is that of Laccase-C1 from Cerrena unicolor (Canker rot fungus).